The following is a 361-amino-acid chain: Beta-hexosaminidase (361 aa).

Substrate is bound by residues D69, R77, R144, and 174–175 (KH). H187 functions as the Proton donor/acceptor in the catalytic mechanism. Catalysis depends on D258, which acts as the Nucleophile.

It belongs to the glycosyl hydrolase 3 family. NagZ subfamily.

It localises to the cytoplasm. It carries out the reaction Hydrolysis of terminal non-reducing N-acetyl-D-hexosamine residues in N-acetyl-beta-D-hexosaminides.. Its pathway is cell wall biogenesis; peptidoglycan recycling. Its function is as follows. Plays a role in peptidoglycan recycling by cleaving the terminal beta-1,4-linked N-acetylglucosamine (GlcNAc) from peptide-linked peptidoglycan fragments, giving rise to free GlcNAc, anhydro-N-acetylmuramic acid and anhydro-N-acetylmuramic acid-linked peptides. The chain is Beta-hexosaminidase from Neisseria meningitidis serogroup A / serotype 4A (strain DSM 15465 / Z2491).